The chain runs to 246 residues: Zinc import ATP-binding protein ZnuC (246 aa).

An ABC transporter domain is found at leucine 24–tyrosine 243. Glycine 56–threonine 63 contributes to the ATP binding site.

The protein belongs to the ABC transporter superfamily. Zinc importer (TC 3.A.1.15.5) family. The complex is composed of two ATP-binding proteins (ZnuC), two transmembrane proteins (ZnuB) and a solute-binding protein (ZnuA).

Its subcellular location is the cell membrane. The enzyme catalyses Zn(2+)(out) + ATP(in) + H2O(in) = Zn(2+)(in) + ADP(in) + phosphate(in) + H(+)(in). In terms of biological role, part of the ABC transporter complex ZnuABC involved in zinc import. Responsible for energy coupling to the transport system. This Wolbachia pipientis wMel protein is Zinc import ATP-binding protein ZnuC.